The chain runs to 419 residues: Tyrosine--tRNA ligase (419 aa).

L-tyrosine is bound at residue Tyr-34. The short motif at 39–48 (PTADSLHIGN) is the 'HIGH' region element. Tyr-169 and Gln-173 together coordinate L-tyrosine. The 'KMSKS' region signature appears at 230–234 (KFGKT). Lys-233 serves as a coordination point for ATP. Positions 352–419 (VPLVELLVSA…KKKYYLIRYA (68 aa)) constitute an S4 RNA-binding domain.

The protein belongs to the class-I aminoacyl-tRNA synthetase family. TyrS type 1 subfamily. In terms of assembly, homodimer.

It localises to the cytoplasm. It carries out the reaction tRNA(Tyr) + L-tyrosine + ATP = L-tyrosyl-tRNA(Tyr) + AMP + diphosphate + H(+). In terms of biological role, catalyzes the attachment of tyrosine to tRNA(Tyr) in a two-step reaction: tyrosine is first activated by ATP to form Tyr-AMP and then transferred to the acceptor end of tRNA(Tyr). The polypeptide is Tyrosine--tRNA ligase (Bacillus caldotenax).